The primary structure comprises 565 residues: MKMRPRYSVIASAVSLGFVLSKSVMALDRPDTGSLNRELEQRQIQSEAKPSGELFNQTANSPYTAQYKQGLKFPLKQVQILDRNNQEVVTDELAHILKNYVGKEVSLSDLSNLANEISEFYRHNNYLVAKAILPPQEIEQGTVKILLLKGNVGEIRLQNHSALSNKFVSRLSNTTVNASEFILKDELEKFALTINDVPGVNAGLQLSAGKKVGEANLLIKINDAKRFSSYVSVDNQGNKYTGRYRLAAGTKVSNLNGWGDELKLDLMSSNQANLKNARIDYSSLIDGYSTRFGVTANYLDYKLGGNFKSLQSQGHSHTLGAYLLHPTIRTPNFRLSTKVSFNHQNLTDKQQAVYVKQKRKINSLTAGIDGSWNLIKDGTTYFSLSTLFGNLANQTSEKKQYTKEDFQPQSHFTVYNYRLSHEQILPKSFAFNIGINGQFADKTLESSQKMLLGGLSGVRGHQAGAASVDEGHLIQTEFKHYLPVFSQSVLVSSLFYDYGLGKYYKNSQFLEKGVKNSVKLQSVGAGLSLSDAGSYAINVSVAKPLDNNINNADKHQFWLSMIKTF.

The first 26 residues, 1–26 (MKMRPRYSVIASAVSLGFVLSKSVMA), serve as a signal peptide directing secretion. The POTRA domain maps to 73-150 (FPLKQVQILD…GTVKILLLKG (78 aa)).

This sequence belongs to the TPS (TC 1.B.20) family.

It localises to the cell outer membrane. Likely functions in the release of soluble HxuA from the cell. Functionally, probable member of a two partner secretion pathway (TPS) in which it mediates the secretion of HuxA. The polypeptide is Heme/hemopexin transporter protein HuxB (hxuB) (Haemophilus influenzae (strain ATCC 51907 / DSM 11121 / KW20 / Rd)).